The primary structure comprises 438 residues: Proline--tRNA ligase (438 aa).

It belongs to the class-II aminoacyl-tRNA synthetase family. ProS type 2 subfamily. As to quaternary structure, homodimer.

The protein localises to the cytoplasm. It catalyses the reaction tRNA(Pro) + L-proline + ATP = L-prolyl-tRNA(Pro) + AMP + diphosphate. In terms of biological role, catalyzes the attachment of proline to tRNA(Pro) in a two-step reaction: proline is first activated by ATP to form Pro-AMP and then transferred to the acceptor end of tRNA(Pro). The polypeptide is Proline--tRNA ligase (Rickettsia canadensis (strain McKiel)).